We begin with the raw amino-acid sequence, 166 residues long: Ribonuclease H (166 aa).

The 143-residue stretch at 5 to 147 (PRKRVALFTD…VDREARRQAQ (143 aa)) folds into the RNase H type-1 domain. Asp14, Glu52, Asp74, and Asp139 together coordinate Mg(2+). Residues 128-166 (GHTGHPENERVDREARRQAQSQAKTPCPPQAPTLFHEEA) form a disordered region. Basic and acidic residues predominate over residues 131-144 (GHPENERVDREARR).

It belongs to the RNase H family. In terms of assembly, monomer. The cofactor is Mg(2+).

It localises to the cytoplasm. The enzyme catalyses Endonucleolytic cleavage to 5'-phosphomonoester.. Its function is as follows. Endonuclease that specifically degrades the RNA of RNA-DNA hybrids. This Thermus thermophilus (strain ATCC BAA-163 / DSM 7039 / HB27) protein is Ribonuclease H.